The chain runs to 95 residues: Signal recognition particle 19 kDa protein (95 aa).

It belongs to the SRP19 family. As to quaternary structure, part of the signal recognition particle protein translocation system, which is composed of SRP and FtsY. Archaeal SRP consists of a 7S RNA molecule of 300 nucleotides and two protein subunits: SRP54 and SRP19.

Its subcellular location is the cytoplasm. Its function is as follows. Involved in targeting and insertion of nascent membrane proteins into the cytoplasmic membrane. Binds directly to 7S RNA and mediates binding of the 54 kDa subunit of the SRP. This chain is Signal recognition particle 19 kDa protein, found in Methanococcoides burtonii (strain DSM 6242 / NBRC 107633 / OCM 468 / ACE-M).